Reading from the N-terminus, the 45-residue chain is Mu-conotoxin-like Cal 12.1.2a (45 aa).

4 disulfides stabilise this stretch: cysteine 3–cysteine 16, cysteine 11–cysteine 28, cysteine 18–cysteine 33, and cysteine 27–cysteine 39. Position 23 is a 4-hydroxyproline (proline 23). Residues tryptophan 37 and tryptophan 38 each carry the 6'-bromotryptophan modification. Position 40 is a 4-hydroxyproline (proline 40). Position 44 is a 6'-bromotryptophan (tryptophan 44).

In terms of tissue distribution, expressed by the venom duct.

The protein resides in the secreted. In terms of biological role, mu-conotoxins block voltage-gated sodium channels. This toxin reversibly blocks voltage-gated sodium channel in cephalopods, with no alteration in the voltage dependence of sodium conductance or on the kinetics of inactivation. This is Mu-conotoxin-like Cal 12.1.2a from Californiconus californicus (California cone).